The sequence spans 792 residues: Phenylalanine--tRNA ligase beta subunit (792 aa).

In terms of domain architecture, tRNA-binding spans 39 to 147 (AAAFSGVVVG…DNAPIGQDIR (109 aa)). The 76-residue stretch at 400 to 475 (PERPAVRLRP…RLHGYDAIPA (76 aa)) folds into the B5 domain. Residues Asp453, Asp459, Glu462, and Glu463 each coordinate Mg(2+). The region spanning 698 to 791 (SRQPAVTRDV…TETSLGARLR (94 aa)) is the FDX-ACB domain.

The protein belongs to the phenylalanyl-tRNA synthetase beta subunit family. Type 1 subfamily. Tetramer of two alpha and two beta subunits. Mg(2+) serves as cofactor.

The protein localises to the cytoplasm. The enzyme catalyses tRNA(Phe) + L-phenylalanine + ATP = L-phenylalanyl-tRNA(Phe) + AMP + diphosphate + H(+). This is Phenylalanine--tRNA ligase beta subunit from Aromatoleum aromaticum (strain DSM 19018 / LMG 30748 / EbN1) (Azoarcus sp. (strain EbN1)).